The primary structure comprises 114 residues: Photosystem II reaction center Psb28 protein (114 aa).

The protein belongs to the Psb28 family. In terms of assembly, part of the photosystem II complex.

It localises to the plastid. The protein resides in the chloroplast thylakoid membrane. The sequence is that of Photosystem II reaction center Psb28 protein from Gracilaria tenuistipitata var. liui (Red alga).